Here is a 67-residue protein sequence, read N- to C-terminus: Large ribosomal subunit protein uL29 (67 aa).

This sequence belongs to the universal ribosomal protein uL29 family.

The sequence is that of Large ribosomal subunit protein uL29 from Clostridium acetobutylicum (strain ATCC 824 / DSM 792 / JCM 1419 / IAM 19013 / LMG 5710 / NBRC 13948 / NRRL B-527 / VKM B-1787 / 2291 / W).